Reading from the N-terminus, the 170-residue chain is Photosystem II extrinsic protein V (170 aa).

The signal sequence occupies residues 1–33 (MASLFASLGRSLIKLLIVLPVIIGLSISSPAMA). Cys-70, Cys-73, His-74, and His-125 together coordinate heme c.

This sequence belongs to the cytochrome c family. PsbV subfamily. As to quaternary structure, PSII is composed of 1 copy each of membrane proteins PsbA, PsbB, PsbC, PsbD, PsbE, PsbF, PsbH, PsbI, PsbJ, PsbK, PsbL, PsbM, PsbT, PsbX, PsbY, Psb30/Ycf12, peripheral proteins PsbO, CyanoQ (PsbQ), PsbU, PsbV and a large number of cofactors. It forms dimeric complexes. Heme c is required as a cofactor.

It localises to the cellular thylakoid membrane. Its function is as follows. One of the extrinsic, lumenal subunits of photosystem II (PSII). PSII is a light-driven water plastoquinone oxidoreductase, using light energy to abstract electrons from H(2)O, generating a proton gradient subsequently used for ATP formation. The extrinsic proteins stabilize the structure of photosystem II oxygen-evolving complex (OEC), the ion environment of oxygen evolution and protect the OEC against heat-induced inactivation. Low-potential cytochrome c that plays a role in the OEC of PSII. The chain is Photosystem II extrinsic protein V from Prochlorococcus marinus (strain MIT 9303).